Consider the following 228-residue polypeptide: Phosphoglycolate phosphatase (228 aa).

D9 acts as the Nucleophile in catalysis. Mg(2+) contacts are provided by D9 and D11. K151 is a substrate binding site. Mg(2+) contacts are provided by D174 and D178.

It belongs to the archaeal SPP-like hydrolase family. Mg(2+) serves as cofactor.

It carries out the reaction 2-phosphoglycolate + H2O = glycolate + phosphate. Catalyzes the dephosphorylation of 2-phosphoglycolate. The chain is Phosphoglycolate phosphatase from Pyrobaculum neutrophilum (strain DSM 2338 / JCM 9278 / NBRC 100436 / V24Sta) (Thermoproteus neutrophilus).